A 303-amino-acid chain; its full sequence is Porphobilinogen deaminase (303 aa).

C235 carries the S-(dipyrrolylmethanemethyl)cysteine modification.

This sequence belongs to the HMBS family. In terms of assembly, monomer. It depends on dipyrromethane as a cofactor.

It catalyses the reaction 4 porphobilinogen + H2O = hydroxymethylbilane + 4 NH4(+). It participates in porphyrin-containing compound metabolism; protoporphyrin-IX biosynthesis; coproporphyrinogen-III from 5-aminolevulinate: step 2/4. Tetrapolymerization of the monopyrrole PBG into the hydroxymethylbilane pre-uroporphyrinogen in several discrete steps. The polypeptide is Porphobilinogen deaminase (Campylobacter fetus subsp. fetus (strain 82-40)).